The chain runs to 214 residues: Probable septum site-determining protein MinC (214 aa).

The protein belongs to the MinC family. As to quaternary structure, interacts with MinD and FtsZ.

Functionally, cell division inhibitor that blocks the formation of polar Z ring septums. Rapidly oscillates between the poles of the cell to destabilize FtsZ filaments that have formed before they mature into polar Z rings. Prevents FtsZ polymerization. The sequence is that of Probable septum site-determining protein MinC from Caldanaerobacter subterraneus subsp. tengcongensis (strain DSM 15242 / JCM 11007 / NBRC 100824 / MB4) (Thermoanaerobacter tengcongensis).